The following is a 391-amino-acid chain: NAD(P)H-quinone oxidoreductase subunit H, chloroplastic (391 aa).

Belongs to the complex I 49 kDa subunit family. NDH is composed of at least 16 different subunits, 5 of which are encoded in the nucleus.

It is found in the plastid. It localises to the chloroplast thylakoid membrane. It catalyses the reaction a plastoquinone + NADH + (n+1) H(+)(in) = a plastoquinol + NAD(+) + n H(+)(out). The enzyme catalyses a plastoquinone + NADPH + (n+1) H(+)(in) = a plastoquinol + NADP(+) + n H(+)(out). NDH shuttles electrons from NAD(P)H:plastoquinone, via FMN and iron-sulfur (Fe-S) centers, to quinones in the photosynthetic chain and possibly in a chloroplast respiratory chain. The immediate electron acceptor for the enzyme in this species is believed to be plastoquinone. Couples the redox reaction to proton translocation, and thus conserves the redox energy in a proton gradient. This is NAD(P)H-quinone oxidoreductase subunit H, chloroplastic from Mesostigma viride (Green alga).